The primary structure comprises 375 residues: Ornithine carbamoyltransferase, chloroplastic (375 aa).

Residues 123-126 (SMRT), R174, H201, and Q204 each bind carbamoyl phosphate. Residues N232, D293, S297, and M298 each coordinate L-ornithine. C333 acts as the Proton acceptor in catalysis. Carbamoyl phosphate-binding positions include 333-334 (CL) and R361.

The protein belongs to the aspartate/ornithine carbamoyltransferase superfamily. OTCase family. In terms of assembly, homotrimer.

The protein resides in the plastid. It localises to the chloroplast. It catalyses the reaction carbamoyl phosphate + L-ornithine = L-citrulline + phosphate + H(+). This is Ornithine carbamoyltransferase, chloroplastic (ARGF) from Pisum sativum (Garden pea).